We begin with the raw amino-acid sequence, 261 residues long: Global transcriptional regulator CodY (261 aa).

The segment at 1–159 is GAF domain; that stretch reads MPNLLEKTRK…ASTVVGIQLL (159 aa). Residues 207 to 226 constitute a DNA-binding region (H-T-H motif); sequence ASVIADRIGITRSVIVNALR.

Belongs to the CodY family.

It localises to the cytoplasm. In terms of biological role, DNA-binding global transcriptional regulator which is involved in the adaptive response to starvation and acts by directly or indirectly controlling the expression of numerous genes in response to nutrient availability. During rapid exponential growth, CodY is highly active and represses genes whose products allow adaptation to nutrient depletion. This is Global transcriptional regulator CodY from Streptococcus agalactiae serotype Ia (strain ATCC 27591 / A909 / CDC SS700).